A 192-amino-acid chain; its full sequence is Phosphoheptose isomerase (192 aa).

One can recognise an SIS domain in the interval 37-192 (LADSFKQEGK…IQLVEKEMAK (156 aa)). Residue 52 to 54 (NGG) coordinates substrate. Zn(2+) is bound by residues H61 and E65. Substrate is bound by residues E65, 93 to 94 (ND), 119 to 121 (STS), S124, and Q172. 2 residues coordinate Zn(2+): Q172 and H180.

It belongs to the SIS family. GmhA subfamily. Homotetramer. It depends on Zn(2+) as a cofactor.

Its subcellular location is the cytoplasm. It catalyses the reaction 2 D-sedoheptulose 7-phosphate = D-glycero-alpha-D-manno-heptose 7-phosphate + D-glycero-beta-D-manno-heptose 7-phosphate. It participates in carbohydrate biosynthesis; D-glycero-D-manno-heptose 7-phosphate biosynthesis; D-glycero-alpha-D-manno-heptose 7-phosphate and D-glycero-beta-D-manno-heptose 7-phosphate from sedoheptulose 7-phosphate: step 1/1. In terms of biological role, catalyzes the isomerization of sedoheptulose 7-phosphate in D-glycero-D-manno-heptose 7-phosphate. The polypeptide is Phosphoheptose isomerase (Aeromonas hydrophila subsp. hydrophila (strain ATCC 7966 / DSM 30187 / BCRC 13018 / CCUG 14551 / JCM 1027 / KCTC 2358 / NCIMB 9240 / NCTC 8049)).